The primary structure comprises 412 residues: MCLTAAPSRVSPVAAAAAAAADVAGSSESTVNLMADVDKKDPQYKQIFLERFRKKLQSDKTGMNDLESFVELPEGVAPSAASIGPIKRGSEPLPPWLKLKVPKGMTHRPRFNRIRRSMREKNLSTVCEEAKCPNIGECWGGSDDEGTATATIMVMGSHCTRGCRFCSVLTSRRPPPLDPEEPEKVAAAVHEMGVDYIVMTMVDRDDLPDGGASHVCRCIHTIKEKNPALMLEALVGDFHGDLKLVEQLAVTPLSVYAHNIECVERITPRVRDRRASYKQSLQTLEHVTKSTNGKMLTKSSIMLGLGEEEKEVRQTLRDLRTAGVSAVTLGQYLQPSRTRLKVSRYAHPKEFEMWEKEAMDMGFLYCASGPMVRSSYRAGEYYIKSILKQRQSAEGGKATAAATAANAGAAIA.

C127, C132, C138, C159, C163, C166, and S375 together coordinate [4Fe-4S] cluster. The Radical SAM core domain maps to S142–L364.

This sequence belongs to the radical SAM superfamily. Lipoyl synthase family. [4Fe-4S] cluster serves as cofactor.

The protein localises to the mitochondrion. The catalysed reaction is [[Fe-S] cluster scaffold protein carrying a second [4Fe-4S](2+) cluster] + N(6)-octanoyl-L-lysyl-[protein] + 2 oxidized [2Fe-2S]-[ferredoxin] + 2 S-adenosyl-L-methionine + 4 H(+) = [[Fe-S] cluster scaffold protein] + N(6)-[(R)-dihydrolipoyl]-L-lysyl-[protein] + 4 Fe(3+) + 2 hydrogen sulfide + 2 5'-deoxyadenosine + 2 L-methionine + 2 reduced [2Fe-2S]-[ferredoxin]. It functions in the pathway protein modification; protein lipoylation via endogenous pathway; protein N(6)-(lipoyl)lysine from octanoyl-[acyl-carrier-protein]: step 2/2. Its function is as follows. Catalyzes the radical-mediated insertion of two sulfur atoms into the C-6 and C-8 positions of the octanoyl moiety bound to the lipoyl domains of lipoate-dependent enzymes, thereby converting the octanoylated domains into lipoylated derivatives. In Leishmania infantum, this protein is Lipoyl synthase, mitochondrial.